A 487-amino-acid chain; its full sequence is N-succinylglutamate 5-semialdehyde dehydrogenase (487 aa).

Residue 221–226 (GSSDTG) coordinates NAD(+). Residues Glu244 and Cys278 contribute to the active site.

Belongs to the aldehyde dehydrogenase family. AstD subfamily.

It catalyses the reaction N-succinyl-L-glutamate 5-semialdehyde + NAD(+) + H2O = N-succinyl-L-glutamate + NADH + 2 H(+). It functions in the pathway amino-acid degradation; L-arginine degradation via AST pathway; L-glutamate and succinate from L-arginine: step 4/5. Functionally, catalyzes the NAD-dependent reduction of succinylglutamate semialdehyde into succinylglutamate. In Burkholderia ambifaria (strain MC40-6), this protein is N-succinylglutamate 5-semialdehyde dehydrogenase.